The sequence spans 378 residues: P2X receptor A (378 aa).

Topologically, residues 1–27 (MGFSFDWDDIFQYSTVKIVRIRDRRLG) are cytoplasmic. The helical transmembrane segment at 28 to 48 (ILHLSFLVGIVAYIVVYSAII) threads the bilayer. The Lumenal portion of the chain corresponds to 49–307 (KKGYLFTEVP…IQTGTIGSFH (259 aa)). The tract at residues 290 to 303 (RHGIRVIFIQTGTI) is pore-forming motif. Residues 308-328 (FQTLLLTLVSGLGLLAVATTV) form a helical membrane-spanning segment. Topologically, residues 329–378 (VDQLAIRLLPQRKSYSSLKFQVTESMSNPMKKRITTDEGEDVLYTRIEGL) are cytoplasmic.

Belongs to the P2X receptor family.

It localises to the contractile vacuole membrane. P2X receptors are ATP-gated ion channels that play a role in intracellular calcium signaling. Not required for the purinergic response to extracellular nucleotides. Inward currents evoked by intracellular ATP and ATP analogs. Exclusively selective for ATP over other nucleotides. Insensitive to P2 receptor antagonists PPADS, suramin and 2',3'-O-(2,4,6-trinitrophenyl)-ATP but inhibited by nanomolar concentrations of copper and sodium ion. More permeable to ammonium than either sodium or potassium ions and less permeable to choline. It has been reported that p2xA is not essential for osmoregulation, however this information is in contradiction with another source which indicates that p2xA is required for osmoregulation. Found to be permeable to chloride ions. Inhibited by copper and sodium ions. In Dictyostelium discoideum (Social amoeba), this protein is P2X receptor A (p2xA).